Reading from the N-terminus, the 408-residue chain is Acetate kinase (408 aa).

Asn-7 is a Mg(2+) binding site. Residue Lys-14 coordinates ATP. Substrate is bound at residue Arg-91. Asp-148 functions as the Proton donor/acceptor in the catalytic mechanism. ATP contacts are provided by residues 208-212 (HLGNG), 283-285 (DFR), and 331-335 (GIGEN). Mg(2+) is bound at residue Glu-384.

It belongs to the acetokinase family. As to quaternary structure, homodimer. It depends on Mg(2+) as a cofactor. Requires Mn(2+) as cofactor.

The protein resides in the cytoplasm. The enzyme catalyses acetate + ATP = acetyl phosphate + ADP. The protein operates within metabolic intermediate biosynthesis; acetyl-CoA biosynthesis; acetyl-CoA from acetate: step 1/2. In terms of biological role, catalyzes the formation of acetyl phosphate from acetate and ATP. Can also catalyze the reverse reaction. The chain is Acetate kinase from Methanosarcina barkeri (strain Fusaro / DSM 804).